Consider the following 469-residue polypeptide: Pup--protein ligase (469 aa).

Glu9 provides a ligand contact to Mg(2+). Arg53 contributes to the ATP binding site. Tyr55 contributes to the Mg(2+) binding site. Asp57 serves as the catalytic Proton acceptor. Glu63 contributes to the Mg(2+) binding site. 2 residues coordinate ATP: Thr66 and Trp430.

It belongs to the Pup ligase/Pup deamidase family. Pup-conjugating enzyme subfamily.

It carries out the reaction ATP + [prokaryotic ubiquitin-like protein]-L-glutamate + [protein]-L-lysine = ADP + phosphate + N(6)-([prokaryotic ubiquitin-like protein]-gamma-L-glutamyl)-[protein]-L-lysine.. Its pathway is protein degradation; proteasomal Pup-dependent pathway. It functions in the pathway protein modification; protein pupylation. Its function is as follows. Catalyzes the covalent attachment of the prokaryotic ubiquitin-like protein modifier Pup to the proteasomal substrate proteins, thereby targeting them for proteasomal degradation. This tagging system is termed pupylation. The ligation reaction involves the side-chain carboxylate of the C-terminal glutamate of Pup and the side-chain amino group of a substrate lysine. This chain is Pup--protein ligase, found in Kocuria rhizophila (strain ATCC 9341 / DSM 348 / NBRC 103217 / DC2201).